A 255-amino-acid polypeptide reads, in one-letter code: Taurine import ATP-binding protein TauB (255 aa).

An ABC transporter domain is found at 2–229 (LQISHLYADY…RFVAGESSRS (228 aa)). 34–41 (GPSGCGKT) contributes to the ATP binding site.

The protein belongs to the ABC transporter superfamily. Taurine importer (TC 3.A.1.17.1) family. The complex is composed of two ATP-binding proteins (TauB), two transmembrane proteins (TauC) and a solute-binding protein (TauA).

Its subcellular location is the cell inner membrane. It catalyses the reaction taurine(out) + ATP + H2O = taurine(in) + ADP + phosphate + H(+). Its function is as follows. Part of the ABC transporter complex TauABC involved in taurine import. Responsible for energy coupling to the transport system. In Escherichia coli O6:H1 (strain CFT073 / ATCC 700928 / UPEC), this protein is Taurine import ATP-binding protein TauB.